Reading from the N-terminus, the 513-residue chain is MGPTKYIIIAVVIIIICVILGLYVVDKKAKEKLSEASKEARRLKEEAERDAEAKKKEAILEAKEESHKLRAEVERENRERRNEVQRLERRIIQKEEALDKKSEALENKEEALNKKQQKIEDVETHMEELHEKQRTELERISGLTTEQAKEFLLEQVRKEVKHETAVMIKEIETKAKEEADKRAREVITYAIQRCAADHVAETTVHVVNLPNDEMKGRIIGREGRNIRTLETLTGVDLIIDDTPEAVILSGFDPIRREVARIALEKLIVDGRIHPARIEEMVEKAKKEVEVSIKEEGEQATFETGIHGLHIELIRLLGRLKYRTSYGQNVLKHSIEVSHLAGLMASELGIDPTLAKRVGLLHDIGKAVDHEVEGPHAIIGSEIAKKYRESALVVNAIGAHHGDMEPQSLEAILVQAADAISAARPGARRETLEAYIKRLEKLEEIANECEGVEKSYAIQAGREIRIMVKPEVLDDTGCIEMARNIVKQIESELEYPGQIKVNVIRETRAIEYAK.

A helical transmembrane segment spans residues 6-26; that stretch reads YIIIAVVIIIICVILGLYVVD. The segment at 35–59 is disordered; it reads EASKEARRLKEEAERDAEAKKKEAI. The KH domain occupies 203–288; sequence TVHVVNLPND…EMVEKAKKEV (86 aa). One can recognise an HD domain in the interval 329 to 422; that stretch reads VLKHSIEVSH…VQAADAISAA (94 aa).

This sequence belongs to the RNase Y family.

The protein localises to the cell membrane. Functionally, endoribonuclease that initiates mRNA decay. This Clostridium botulinum (strain Okra / Type B1) protein is Ribonuclease Y.